We begin with the raw amino-acid sequence, 458 residues long: UDP-N-acetylmuramate--L-alanine ligase (458 aa).

118 to 124 (GTHGKTT) contacts ATP.

The protein belongs to the MurCDEF family.

Its subcellular location is the cytoplasm. The enzyme catalyses UDP-N-acetyl-alpha-D-muramate + L-alanine + ATP = UDP-N-acetyl-alpha-D-muramoyl-L-alanine + ADP + phosphate + H(+). It functions in the pathway cell wall biogenesis; peptidoglycan biosynthesis. Cell wall formation. In Clostridium novyi (strain NT), this protein is UDP-N-acetylmuramate--L-alanine ligase.